Consider the following 338-residue polypeptide: tRNA (cytidine(56)-2'-O)-methyltransferase (338 aa).

S-adenosyl-L-methionine-binding positions include Leu-79 and 105–109; that span reads GSEKV. The HD domain occupies 188-295; that stretch reads LINHVKSVKE…VAHADNLFAG (108 aa).

This sequence belongs to the aTrm56 family. In terms of assembly, homodimer.

Its subcellular location is the cytoplasm. The catalysed reaction is cytidine(56) in tRNA + S-adenosyl-L-methionine = 2'-O-methylcytidine(56) in tRNA + S-adenosyl-L-homocysteine + H(+). Specifically catalyzes the AdoMet-dependent 2'-O-ribose methylation of cytidine at position 56 in tRNAs. The polypeptide is tRNA (cytidine(56)-2'-O)-methyltransferase (Thermoplasma volcanium (strain ATCC 51530 / DSM 4299 / JCM 9571 / NBRC 15438 / GSS1)).